Reading from the N-terminus, the 236-residue chain is Three prime repair exonuclease 2 (236 aa).

2 residues coordinate Mg(2+): Asp-14 and Glu-16. Residues Glu-16–Ala-17 and Tyr-122 each bind substrate. The active-site Proton donor/acceptor is His-188. Asp-193 contacts Mg(2+). Asp-193 provides a ligand contact to substrate.

This sequence belongs to the exonuclease superfamily. TREX family. Homodimer. Requires Mg(2+) as cofactor.

The protein resides in the nucleus. The enzyme catalyses Exonucleolytic cleavage in the 3'- to 5'-direction to yield nucleoside 5'-phosphates.. Its function is as follows. Exonuclease with a preference for double-stranded DNA with mismatched 3' termini. May play a role in DNA repair. In Mus musculus (Mouse), this protein is Three prime repair exonuclease 2 (Trex2).